Here is a 192-residue protein sequence, read N- to C-terminus: Adenylate kinase (192 aa).

12–17 is an ATP binding site; the sequence is GSGKTT. The NMP stretch occupies residues 34–63; that stretch reads STGDLLRAQVASGSELGKTIDSFISKGNLV. Residues Thr35, Arg40, 61–63, 88–91, and Gln95 each bind AMP; these read NLV and GYPR. Residues 130–136 form an LID region; the sequence is GRNRGAD. Arg131 contacts ATP. Residues Arg133 and Arg145 each coordinate AMP. Arg173 contacts ATP.

It belongs to the adenylate kinase family. In terms of assembly, monomer.

The protein localises to the cytoplasm. The enzyme catalyses AMP + ATP = 2 ADP. It functions in the pathway purine metabolism; AMP biosynthesis via salvage pathway; AMP from ADP: step 1/1. Catalyzes the reversible transfer of the terminal phosphate group between ATP and AMP. Plays an important role in cellular energy homeostasis and in adenine nucleotide metabolism. The chain is Adenylate kinase from Campylobacter jejuni subsp. doylei (strain ATCC BAA-1458 / RM4099 / 269.97).